Reading from the N-terminus, the 305-residue chain is tRNA pseudouridine synthase B (305 aa).

The active-site Nucleophile is the Asp48.

Belongs to the pseudouridine synthase TruB family. Type 1 subfamily.

It carries out the reaction uridine(55) in tRNA = pseudouridine(55) in tRNA. In terms of biological role, responsible for synthesis of pseudouridine from uracil-55 in the psi GC loop of transfer RNAs. The chain is tRNA pseudouridine synthase B from Pseudomonas putida (strain ATCC 700007 / DSM 6899 / JCM 31910 / BCRC 17059 / LMG 24140 / F1).